Here is a 540-residue protein sequence, read N- to C-terminus: Chaperonin GroEL (540 aa).

ATP contacts are provided by residues 30–33 (TLGP), Lys-51, 87–91 (DGTTT), Gly-415, and Asp-495.

This sequence belongs to the chaperonin (HSP60) family. In terms of assembly, forms a cylinder of 14 subunits composed of two heptameric rings stacked back-to-back. Interacts with the co-chaperonin GroES.

It is found in the cytoplasm. It carries out the reaction ATP + H2O + a folded polypeptide = ADP + phosphate + an unfolded polypeptide.. Functionally, together with its co-chaperonin GroES, plays an essential role in assisting protein folding. The GroEL-GroES system forms a nano-cage that allows encapsulation of the non-native substrate proteins and provides a physical environment optimized to promote and accelerate protein folding. In Rhodothermus marinus (Rhodothermus obamensis), this protein is Chaperonin GroEL.